We begin with the raw amino-acid sequence, 138 residues long: Small ribosomal subunit protein uS17 (138 aa).

Basic and acidic residues-rich tracts occupy residues 1–18 (MSEE…RAEA) and 43–55 (AFDR…QKDT). The tract at residues 1-62 (MSEEERNRGA…KDTRRGRRKE (62 aa)) is disordered.

The protein belongs to the universal ribosomal protein uS17 family. In terms of assembly, part of the 30S ribosomal subunit.

Functionally, one of the primary rRNA binding proteins, it binds specifically to the 5'-end of 16S ribosomal RNA. The protein is Small ribosomal subunit protein uS17 of Rubrobacter xylanophilus (strain DSM 9941 / JCM 11954 / NBRC 16129 / PRD-1).